The primary structure comprises 459 residues: MLDTDTITAISTPVGEGAIAIVRLSGSEAITITSQIFEGKNLQEVPSHTIQYGKIIDPGTNEVAEEVMVSIMRGPKTFTREDVVEINCHGGMVAVNRVLEIVLAKGVRLAEPGEFTKRAFLHGRIDLSQAEAVMDLIRAKTDKAMSVALKQMDGRLSKLIQKLRQELLETVAHVEVNIDYPEYDDVEEMSHAMMKEKSKEVRDELDKLLQIAQQGKILREGLSTAIIGRPNVGKSSLMNTLVQENKAIVTEIPGTTRDIIEEYVNVRGVPLRLVDTAGIRETEDIVERIGVDRSRQVLKESDLILFVLNYNEPLSEDDKKLFEAVDGLEYIVIINKTDLEQQLDLDEVREFAKDRPVVTTALLEEQGVDELEKAIADTFFTGDIDTGDMTYVSNVRHIQLLKQAKQALEDAMEGIELGMPMDIVQIDVTRSWEFMGEIIGDTASDSLIDQLFSQFCLGK.

Residues arginine 23, glutamate 85, and arginine 124 each coordinate (6S)-5-formyl-5,6,7,8-tetrahydrofolate. A TrmE-type G domain is found at 221–380 (GLSTAIIGRP…LEKAIADTFF (160 aa)). Residue asparagine 231 coordinates K(+). GTP-binding positions include 231-236 (NVGKSS), 250-256 (TEIPGTT), and 275-278 (DTAG). Serine 235 is a Mg(2+) binding site. 3 residues coordinate K(+): threonine 250, isoleucine 252, and threonine 255. Threonine 256 is a binding site for Mg(2+). Position 459 (lysine 459) interacts with (6S)-5-formyl-5,6,7,8-tetrahydrofolate.

The protein belongs to the TRAFAC class TrmE-Era-EngA-EngB-Septin-like GTPase superfamily. TrmE GTPase family. In terms of assembly, homodimer. Heterotetramer of two MnmE and two MnmG subunits. It depends on K(+) as a cofactor.

It is found in the cytoplasm. In terms of biological role, exhibits a very high intrinsic GTPase hydrolysis rate. Involved in the addition of a carboxymethylaminomethyl (cmnm) group at the wobble position (U34) of certain tRNAs, forming tRNA-cmnm(5)s(2)U34. The protein is tRNA modification GTPase MnmE of Oceanobacillus iheyensis (strain DSM 14371 / CIP 107618 / JCM 11309 / KCTC 3954 / HTE831).